A 308-amino-acid chain; its full sequence is tRNA uridine(34) hydroxylase (308 aa).

The 95-residue stretch at 129-223 (QEKDTLILDA…YGKHPETQGA (95 aa)) folds into the Rhodanese domain. The active-site Cysteine persulfide intermediate is Cys183.

Belongs to the TrhO family.

It carries out the reaction uridine(34) in tRNA + AH2 + O2 = 5-hydroxyuridine(34) in tRNA + A + H2O. Catalyzes oxygen-dependent 5-hydroxyuridine (ho5U) modification at position 34 in tRNAs. The polypeptide is tRNA uridine(34) hydroxylase (Onion yellows phytoplasma (strain OY-M)).